A 391-amino-acid chain; its full sequence is MSTNRRRLVILVADSAGCGALPDAAAYGDEGSDTLGNTSRAVGGLSLPVLGRMGLGHVTAIQGVPPDPAPTAFHGRMAERSEGKDTTTGHWEMMGVVLREGLRTFPRGFPPEILEAFVRETGAPGVLGNTVASGTVIIQELGEEHQRTGKPIVYTSADSVFQVAAHTDTVPLETLYAWCRTARRILDPWRVARVIARPFVGTPGSYARTYDRKDFSMPPPAPTVLERLVEAGVPVVGVGKIPDIFDRRGITEEIHTAGNADGLARTAALLDRVDRGLVFVNLVDFDMLYGHRNDPAGYARALEELDRGLPAILDRLGPGELLALTADHGCDPTTPSTDHSREHVPLIVHAPGRGGGDLGTRATFADLGATVAEYFGVRSEVGTSFLAEVTR.

A Mn(2+)-binding site is contributed by aspartate 14. The segment at 61–88 is disordered; the sequence is IQGVPPDPAPTAFHGRMAERSEGKDTTT. Basic and acidic residues predominate over residues 76-87; the sequence is RMAERSEGKDTT. Mn(2+) is bound by residues aspartate 286, histidine 291, aspartate 327, histidine 328, and histidine 339.

This sequence belongs to the phosphopentomutase family. It depends on Mn(2+) as a cofactor.

Its subcellular location is the cytoplasm. The catalysed reaction is 2-deoxy-alpha-D-ribose 1-phosphate = 2-deoxy-D-ribose 5-phosphate. It catalyses the reaction alpha-D-ribose 1-phosphate = D-ribose 5-phosphate. It participates in carbohydrate degradation; 2-deoxy-D-ribose 1-phosphate degradation; D-glyceraldehyde 3-phosphate and acetaldehyde from 2-deoxy-alpha-D-ribose 1-phosphate: step 1/2. In terms of biological role, isomerase that catalyzes the conversion of deoxy-ribose 1-phosphate (dRib-1-P) and ribose 1-phosphate (Rib-1-P) to deoxy-ribose 5-phosphate (dRib-5-P) and ribose 5-phosphate (Rib-5-P), respectively. This is Phosphopentomutase from Anaeromyxobacter dehalogenans (strain 2CP-C).